The sequence spans 308 residues: Isoaspartyl peptidase/L-asparaginase (308 aa).

M1 carries the N-acetylmethionine modification. Residue T168 is the Nucleophile of the active site. Residues 196–199 (RVGD) and 219–222 (TGHG) each bind substrate.

This sequence belongs to the Ntn-hydrolase family. Heterodimer of an alpha and beta chain produced by autocleavage. This heterodimer may then dimerize in turn, giving rise to a heterotetramer. Post-translationally, cleaved into an alpha and beta chain by autocatalysis; this activates the enzyme. The N-terminal residue of the beta subunit is responsible for the nucleophile hydrolase activity.

The protein localises to the cytoplasm. It carries out the reaction L-asparagine + H2O = L-aspartate + NH4(+). The catalysed reaction is Cleavage of a beta-linked Asp residue from the N-terminus of a polypeptide.. Has both L-asparaginase and beta-aspartyl peptidase activity. May be involved in the production of L-aspartate, which can act as an excitatory neurotransmitter in some brain regions. Is highly active with L-Asp beta-methyl ester. Besides, has catalytic activity toward beta-aspartyl dipeptides and their methyl esters, including beta-L-Asp-L-Phe, beta-L-Asp-L-Phe methyl ester (aspartame), beta-L-Asp-L-Ala, beta-L-Asp-L-Leu and beta-L-Asp-L-Lys. Does not have aspartylglucosaminidase activity and is inactive toward GlcNAc-L-Asn. Likewise, has no activity toward glutamine. The chain is Isoaspartyl peptidase/L-asparaginase (ASRGL1) from Bos taurus (Bovine).